The sequence spans 405 residues: Glyceraldehyde-3-phosphate dehydrogenase A, chloroplastic (405 aa).

The N-terminal 68 residues, 1-68, are a transit peptide targeting the chloroplast; that stretch reads MASATFSVAK…GHKKSLVVEA (68 aa). NADP(+) is bound by residues 80–81, aspartate 104, and arginine 149; that span reads RI. Residues 221 to 223, threonine 252, arginine 267, 280 to 281, and arginine 303 contribute to the D-glyceraldehyde 3-phosphate site; these read SCT and TG. Cysteine 222 (nucleophile) is an active-site residue. Asparagine 385 contacts NADP(+).

It belongs to the glyceraldehyde-3-phosphate dehydrogenase family. In terms of assembly, tetramer of either four A chains (GAPDH 2) or two A and two B chains (GAPDH 1).

Its subcellular location is the plastid. It localises to the chloroplast. The enzyme catalyses D-glyceraldehyde 3-phosphate + phosphate + NADP(+) = (2R)-3-phospho-glyceroyl phosphate + NADPH + H(+). It functions in the pathway carbohydrate biosynthesis; Calvin cycle. The protein is Glyceraldehyde-3-phosphate dehydrogenase A, chloroplastic (GAPA) of Pisum sativum (Garden pea).